The sequence spans 328 residues: Glyoxylate reductase/hydroxypyruvate reductase (328 aa).

Phosphoserine is present on S36. 83 to 84 contacts substrate; it reads VG. NADP(+) contacts are provided by residues 162–164, 185–188, S217, and I243; these read GRI and RQPR. Residues R245, D269, and 293–296 contribute to the substrate site; that span reads HIGS. H293 (proton donor) is an active-site residue. G295 is an NADP(+) binding site. T298 is modified (phosphothreonine).

This sequence belongs to the D-isomer specific 2-hydroxyacid dehydrogenase family. As to quaternary structure, homodimer.

The enzyme catalyses glycolate + NADP(+) = glyoxylate + NADPH + H(+). It catalyses the reaction (R)-glycerate + NAD(+) = 3-hydroxypyruvate + NADH + H(+). It carries out the reaction (R)-glycerate + NADP(+) = 3-hydroxypyruvate + NADPH + H(+). In terms of biological role, enzyme with hydroxy-pyruvate reductase, glyoxylate reductase and D-glycerate dehydrogenase enzymatic activities. Reduces hydroxypyruvate to D-glycerate, glyoxylate to glycolate oxidizes D-glycerate to hydroxypyruvate. The polypeptide is Glyoxylate reductase/hydroxypyruvate reductase (Grhpr) (Mus musculus (Mouse)).